We begin with the raw amino-acid sequence, 317 residues long: SVP1-like protein 2 (317 aa).

WD repeat units lie at residues 119–159 (AHST…KMAE) and 164–203 (VDHA…NAPY).

This sequence belongs to the WD repeat PROPPIN family.

Its subcellular location is the vacuole membrane. The protein localises to the cytoplasmic vesicle membrane. Its function is as follows. Involved in mitochondrial or peroxisomal functions and amino acid signaling pathways. This is SVP1-like protein 2 (hsv2) from Emericella nidulans (strain FGSC A4 / ATCC 38163 / CBS 112.46 / NRRL 194 / M139) (Aspergillus nidulans).